The sequence spans 81 residues: Gamma-conotoxin-like TeA53 (81 aa).

Residues 1-19 (MQKLTILLLVAAVLMSTQA) form the signal peptide. The propeptide occupies 20–42 (LNQEQHQRAKINLLSKRKPPAER). 3 cysteine pairs are disulfide-bonded: Cys-49-Cys-63, Cys-56-Cys-67, and Cys-62-Cys-72.

It belongs to the conotoxin O2 superfamily. As to expression, expressed by the venom duct.

The protein resides in the secreted. Functionally, gamma-conotoxins may act on voltage-gated non-specific cation pacemaker channels (HCN). In Conus textile (Cloth-of-gold cone), this protein is Gamma-conotoxin-like TeA53.